The following is a 301-amino-acid chain: MKYTIISGPTAVGKTDIVLEIASQINANIISVDSRQIYKLMDIGTAKPSKEEKSKVTHYLIDHIYPDEYYNAFLFRQDALKIRDKLVNEGIVPLFVGGTGLYIDSLVRGFFEGVPKDEKLRKELSEMEKNEPGILRSMLEKYDPQAAQKIHPSDIKRTIRALEVYFKTGKKISQLQTQSEYSKDYKILVLDRYRDELYERINLRVDKMIKEGLVDEVKSLLEKYPKDLNAFQTIGYKEIIRYLENTYDLNTAVHLIKKNTRHYARRQIIWLRRYKQAKWINLSEISRKKAIEEIKKFILEV.

Gly-8–Thr-15 lines the ATP pocket. A substrate-binding site is contributed by Thr-10–Thr-15. The interval Asp-33 to Gln-36 is interaction with substrate tRNA.

It belongs to the IPP transferase family. In terms of assembly, monomer. Mg(2+) serves as cofactor.

The catalysed reaction is adenosine(37) in tRNA + dimethylallyl diphosphate = N(6)-dimethylallyladenosine(37) in tRNA + diphosphate. Its function is as follows. Catalyzes the transfer of a dimethylallyl group onto the adenine at position 37 in tRNAs that read codons beginning with uridine, leading to the formation of N6-(dimethylallyl)adenosine (i(6)A). The polypeptide is tRNA dimethylallyltransferase (Thermosipho africanus (strain TCF52B)).